Reading from the N-terminus, the 245-residue chain is 1-(5-phosphoribosyl)-5-[(5-phosphoribosylamino)methylideneamino] imidazole-4-carboxamide isomerase (245 aa).

Aspartate 7 functions as the Proton acceptor in the catalytic mechanism. Aspartate 129 serves as the catalytic Proton donor.

It belongs to the HisA/HisF family.

It is found in the cytoplasm. It carries out the reaction 1-(5-phospho-beta-D-ribosyl)-5-[(5-phospho-beta-D-ribosylamino)methylideneamino]imidazole-4-carboxamide = 5-[(5-phospho-1-deoxy-D-ribulos-1-ylimino)methylamino]-1-(5-phospho-beta-D-ribosyl)imidazole-4-carboxamide. The protein operates within amino-acid biosynthesis; L-histidine biosynthesis; L-histidine from 5-phospho-alpha-D-ribose 1-diphosphate: step 4/9. This is 1-(5-phosphoribosyl)-5-[(5-phosphoribosylamino)methylideneamino] imidazole-4-carboxamide isomerase from Tolumonas auensis (strain DSM 9187 / NBRC 110442 / TA 4).